Here is a 1084-residue protein sequence, read N- to C-terminus: Probable hemoglobin and hemoglobin-haptoglobin-binding protein 3 (1084 aa).

Positions 1 to 24 are cleaved as a signal peptide; sequence MTNFKFSLLACSIAFALNASTVYA. 12 tandem repeats follow at residues 26-29, 30-33, 34-37, 38-41, 42-45, 46-49, 50-53, 54-57, 58-61, 62-65, 66-69, and 70-73. The segment at 26–73 is 12 X 4 AA tandem repeats of Q-P-T-N; it reads QPTNQPTNQPTNQPTNQPTNQPTNQPTNQPTNQPTNQPTNQPTNQPTN. A compositionally biased stretch (low complexity) spans 26–75; that stretch reads QPTNQPTNQPTNQPTNQPTNQPTNQPTNQPTNQPTNQPTNQPTNQPTNQN. The segment at 26 to 77 is disordered; it reads QPTNQPTNQPTNQPTNQPTNQPTNQPTNQPTNQPTNQPTNQPTNQPTNQNSN. A TonB box motif is present at residues 83–90; that stretch reads EQINVSGS. The TBDR plug domain occupies 95-220; the sequence is NIKEKKVGET…LGGSVIFETK (126 aa). A TBDR beta-barrel domain is found at 228–1084; it reads DKDYYLSYKR…NYRMSVQFEF (857 aa). A TonB C-terminal box motif is present at residues 1067-1084; sequence NRFYAPGRNYRMSVQFEF.

The protein belongs to the TonB-dependent receptor family. Hemoglobin/haptoglobin binding protein subfamily.

It is found in the cell outer membrane. In terms of biological role, acts as a receptor for hemoglobin or the hemoglobin/haptoglobin complex of the human host and is required for heme uptake. The polypeptide is Probable hemoglobin and hemoglobin-haptoglobin-binding protein 3 (Haemophilus influenzae (strain ATCC 51907 / DSM 11121 / KW20 / Rd)).